The primary structure comprises 244 residues: 3-oxoacyl-[acyl-carrier-protein] reductase FabG (244 aa).

NADP(+) contacts are provided by residues 12-15 (GANQ) and T37. 2 residues coordinate Ca(2+): E50 and G53. Residues 59 to 60 (NL) and N86 each bind NADP(+). Residue S138 coordinates substrate. N145 is a binding site for Ca(2+). Catalysis depends on Y151, which acts as the Proton acceptor. NADP(+)-binding positions include 151-155 (YSASK) and I184. T234 contributes to the Ca(2+) binding site.

It belongs to the short-chain dehydrogenases/reductases (SDR) family. As to quaternary structure, homotetramer.

It carries out the reaction a (3R)-hydroxyacyl-[ACP] + NADP(+) = a 3-oxoacyl-[ACP] + NADPH + H(+). Its pathway is lipid metabolism; fatty acid biosynthesis. In terms of biological role, catalyzes the NADPH-dependent reduction of beta-ketoacyl-ACP substrates to beta-hydroxyacyl-ACP products, the first reductive step in the elongation cycle of fatty acid biosynthesis. The protein is 3-oxoacyl-[acyl-carrier-protein] reductase FabG (fabG) of Buchnera aphidicola subsp. Acyrthosiphon pisum (strain APS) (Acyrthosiphon pisum symbiotic bacterium).